Consider the following 236-residue polypeptide: 3-oxoacyl-[acyl-carrier-protein] reductase (236 aa).

Met1 carries the N-acetylmethionine modification. Residues Ser11–Ile14 and Arg34–Asn35 each bind NADP(+). At Lys40 the chain carries N6-acetyllysine. Residues Asp56 and Ala83–Gly85 contribute to the NADP(+) site. Position 96 is an N6-acetyllysine (Lys96). Ser134 is a binding site for substrate. Residues Tyr147, Lys151, and Ile180–Thr182 each bind NADP(+). Tyr147 serves as the catalytic Proton acceptor. At Lys194 the chain carries N6-acetyllysine.

This sequence belongs to the short-chain dehydrogenases/reductases (SDR) family. In terms of assembly, homotetramer (in vitro). Heterotetramer with HSD17B8; contains two molecules each of HSD17B8 and CBR4. Does not form homotetramers when HSD17B8 is coexpressed, only heterotetramers (in vitro).

The protein localises to the mitochondrion matrix. It carries out the reaction a (3R)-hydroxyacyl-[ACP] + NADP(+) = a 3-oxoacyl-[ACP] + NADPH + H(+). The catalysed reaction is a quinone + NADPH + H(+) = a quinol + NADP(+). The protein operates within lipid metabolism; fatty acid biosynthesis. Component of the heterotetramer complex KAR (3-ketoacyl-[acyl carrier protein] reductase or 3-ketoacyl-[ACP] reductase) that forms part of the mitochondrial fatty acid synthase (mtFAS). Beta-subunit of the KAR heterotetramer complex, responsible for the 3-ketoacyl-ACP reductase activity of the mtFAS, reduces 3-oxoacyl-[ACP] to (3R)-hydroxyacyl-[ACP] in a NADPH-dependent manner with no chain length preference, thereby participating in mitochondrial fatty acid biosynthesis. The homotetramer has NADPH-dependent quinone reductase activity (in vitro), hence could play a role in protection against cytotoxicity of exogenous quinones. As a heterotetramer, it can also reduce 9,10-phenanthrenequinone, 1,4-benzoquinone and various other o-quinones and p-quinones (in vitro). This Mus musculus (Mouse) protein is 3-oxoacyl-[acyl-carrier-protein] reductase (Cbr4).